Consider the following 406-residue polypeptide: Histone-lysine N-methyltransferase SUV39H2 (406 aa).

A Chromo domain is found at Y43–K101. A Pre-SET domain is found at V185 to G243. Zn(2+) is bound by residues C187, C189, C192, C197, C198, C225, C229, C231, and C235. The region spanning Y246 to Q369 is the SET domain. S-adenosyl-L-methionine contacts are provided by residues R257–W259, Y300, and N326–H327. C329, C394, C396, and C401 together coordinate Zn(2+). One can recognise a Post-SET domain in the interval V390–N406.

The protein belongs to the class V-like SAM-binding methyltransferase superfamily. Histone-lysine methyltransferase family. Suvar3-9 subfamily.

The protein localises to the nucleus. It is found in the chromosome. It localises to the centromere. The catalysed reaction is L-lysyl(9)-[histone H3] + 3 S-adenosyl-L-methionine = N(6),N(6),N(6)-trimethyl-L-lysyl(9)-[histone H3] + 3 S-adenosyl-L-homocysteine + 3 H(+). Histone methyltransferase that specifically trimethylates 'Lys-9' of histone H3 using monomethylated H3 'Lys-9' as substrate. H3 'Lys-9' trimethylation represents a specific tag for epigenetic transcriptional repression by recruiting HP1 (CBX1, CBX3 and/or CBX5) proteins to methylated histones. Mainly functions in heterochromatin regions, thereby playing a central role in the establishment of constitutive heterochromatin at pericentric and telomere regions. H3 'Lys-9' trimethylation is also required to direct DNA methylation at pericentric repeats. SUV39H1 is targeted to histone H3 via its interaction with RB1 and is involved in many processes. The protein is Histone-lysine N-methyltransferase SUV39H2 (suv39h2) of Xenopus tropicalis (Western clawed frog).